The following is a 247-amino-acid chain: Ubiquinone biosynthesis O-methyltransferase (247 aa).

Residues arginine 39, glycine 70, aspartate 91, and methionine 134 each coordinate S-adenosyl-L-methionine.

The protein belongs to the methyltransferase superfamily. UbiG/COQ3 family.

It catalyses the reaction a 3-demethylubiquinol + S-adenosyl-L-methionine = a ubiquinol + S-adenosyl-L-homocysteine + H(+). The catalysed reaction is a 3-(all-trans-polyprenyl)benzene-1,2-diol + S-adenosyl-L-methionine = a 2-methoxy-6-(all-trans-polyprenyl)phenol + S-adenosyl-L-homocysteine + H(+). The protein operates within cofactor biosynthesis; ubiquinone biosynthesis. O-methyltransferase that catalyzes the 2 O-methylation steps in the ubiquinone biosynthetic pathway. This chain is Ubiquinone biosynthesis O-methyltransferase, found in Cereibacter sphaeroides (strain KD131 / KCTC 12085) (Rhodobacter sphaeroides).